The following is a 150-amino-acid chain: S-protein homolog 24 (150 aa).

A glycan (N-linked (GlcNAc...) asparagine) is linked at asparagine 122.

Belongs to the plant self-incompatibility (S1) protein family.

Its subcellular location is the secreted. This is S-protein homolog 24 from Arabidopsis thaliana (Mouse-ear cress).